The following is a 330-amino-acid chain: Phosphate acyltransferase (330 aa).

Belongs to the PlsX family. As to quaternary structure, homodimer. Probably interacts with PlsY.

Its subcellular location is the cytoplasm. The catalysed reaction is a fatty acyl-[ACP] + phosphate = an acyl phosphate + holo-[ACP]. The protein operates within lipid metabolism; phospholipid metabolism. Functionally, catalyzes the reversible formation of acyl-phosphate (acyl-PO(4)) from acyl-[acyl-carrier-protein] (acyl-ACP). This enzyme utilizes acyl-ACP as fatty acyl donor, but not acyl-CoA. The sequence is that of Phosphate acyltransferase from Lysinibacillus sphaericus (strain C3-41).